The following is a 408-amino-acid chain: LL-diaminopimelate aminotransferase (408 aa).

Residues Tyr-15 and Gly-42 each contribute to the substrate site. Residues Tyr-72, 108–109 (SK), Tyr-132, Asn-187, Tyr-218, and 246–248 (SFS) contribute to the pyridoxal 5'-phosphate site. 3 residues coordinate substrate: Lys-109, Tyr-132, and Asn-187. Lys-249 carries the N6-(pyridoxal phosphate)lysine modification. Residues Arg-257 and Asn-292 each coordinate pyridoxal 5'-phosphate. Residues Asn-292 and Arg-388 each coordinate substrate.

The protein belongs to the class-I pyridoxal-phosphate-dependent aminotransferase family. LL-diaminopimelate aminotransferase subfamily. Homodimer. Pyridoxal 5'-phosphate is required as a cofactor.

The enzyme catalyses (2S,6S)-2,6-diaminopimelate + 2-oxoglutarate = (S)-2,3,4,5-tetrahydrodipicolinate + L-glutamate + H2O + H(+). Its pathway is amino-acid biosynthesis; L-lysine biosynthesis via DAP pathway; LL-2,6-diaminopimelate from (S)-tetrahydrodipicolinate (aminotransferase route): step 1/1. Its function is as follows. Involved in the synthesis of meso-diaminopimelate (m-DAP or DL-DAP), required for both lysine and peptidoglycan biosynthesis. Catalyzes the direct conversion of tetrahydrodipicolinate to LL-diaminopimelate. The sequence is that of LL-diaminopimelate aminotransferase from Synechococcus sp. (strain CC9311).